We begin with the raw amino-acid sequence, 380 residues long: Cobalt-precorrin-5B C(1)-methyltransferase (380 aa).

This sequence belongs to the CbiD family.

It catalyses the reaction Co-precorrin-5B + S-adenosyl-L-methionine = Co-precorrin-6A + S-adenosyl-L-homocysteine. The protein operates within cofactor biosynthesis; adenosylcobalamin biosynthesis; cob(II)yrinate a,c-diamide from sirohydrochlorin (anaerobic route): step 6/10. Its function is as follows. Catalyzes the methylation of C-1 in cobalt-precorrin-5B to form cobalt-precorrin-6A. The polypeptide is Cobalt-precorrin-5B C(1)-methyltransferase (Salinispora tropica (strain ATCC BAA-916 / DSM 44818 / JCM 13857 / NBRC 105044 / CNB-440)).